Here is a 391-residue protein sequence, read N- to C-terminus: Cathepsin E (391 aa).

The first 19 residues, methionine 1–glycine 19, serve as a signal peptide directing secretion. The propeptide at alanine 20–methionine 53 is activation peptide. Positions tyrosine 74 to alanine 387 constitute a Peptidase A1 domain. Residue asparagine 86 is glycosylated (N-linked (GlcNAc...) asparagine). Aspartate 92 is an active-site residue. 2 disulfides stabilise this stretch: cysteine 105-cysteine 110 and cysteine 267-cysteine 271. Aspartate 276 is an active-site residue. Cysteine 309 and cysteine 346 are oxidised to a cystine.

Belongs to the peptidase A1 family. In terms of assembly, homodimer; disulfide-linked. Post-translationally, glycosylated. The nature of the carbohydrate chain varies between cell types. In terms of tissue distribution, expressed abundantly in the surface and foveolar epithelial cells of the fundic and pyloric stomach mucosa, and at very low levels in the spleen.

It localises to the endosome. It catalyses the reaction Similar to cathepsin D, but slightly broader specificity.. Its function is as follows. May have a role in immune function. Probably involved in the processing of antigenic peptides during MHC class II-mediated antigen presentation. May play a role in activation-induced lymphocyte depletion in the thymus, and in neuronal degeneration and glial cell activation in the brain. In Cavia porcellus (Guinea pig), this protein is Cathepsin E (CTSE).